Here is a 210-residue protein sequence, read N- to C-terminus: DNA-directed RNA polymerases I, II, and III subunit RPABC1 (210 aa).

Met-1 is modified (N-acetylmethionine). Lys-81 is covalently cross-linked (Glycyl lysine isopeptide (Lys-Gly) (interchain with G-Cter in SUMO2)).

It belongs to the archaeal Rpo5/eukaryotic RPB5 RNA polymerase subunit family. Component of the RNA polymerase I (Pol I), RNA polymerase II (Pol II) and RNA polymerase III (Pol III) complexes consisting of at least 13, 12 and 17 subunits, respectively. Pol I complex consists of a ten-subunit catalytic core composed of POLR1A/RPA1, POLR1B/RPA2, POLR1C/RPAC1, POLR1D/RPAC2, POLR1H/RPA12, POLR2E/RPABC1, POLR2F/RPABC2, POLR2H/RPABC3, POLR2K/RPABC4 and POLR2L/RPABC5; a mobile stalk subunit POLR1F/RPA43 protruding from the core and additional subunits homologous to general transcription factors POLR1E/RPA49 and POLR1G/RPA34. Part of Pol I pre-initiation complex (PIC), in which Pol I core assembles with RRN3 and promoter-bound UTBF and SL1/TIF-IB complex. Pol II complex contains a ten-subunit catalytic core composed of POLR2A/RPB1, POLR2B/RPB2, POLR2C/RPB3, POLR2I/RPB9, POLR2J/RPB11, POLR2E/RPABC1, POLR2F/RPABC2, POLR2H/RPABC3, POLR2K/RPABC4 and POLR2L/RPABC5 and a mobile stalk composed of two subunits POLR2D/RPB4 and POLR2G/RPB7. Part of Pol II(G) complex, in which Pol II core associates with an additional subunit POLR2M; unlike conventional Pol II, Pol II(G) functions as a transcriptional repressor. Part of TBP-based Pol II pre-initiation complex (PIC), in which Pol II core assembles with general transcription factors and other specific initiation factors including GTF2E1, GTF2E2, GTF2F1, GTF2F2, TCEA1, ERCC2, ERCC3, GTF2H2, GTF2H3, GTF2H4, GTF2H5, GTF2A1, GTF2A2, GTF2B and TBP; this large multi-subunit PIC complex mediates DNA unwinding and targets Pol II core to the transcription start site where the first phosphodiester bond forms. In Pol II complex, this subunit is present in 2-fold molar excess over the other subunits. Pol III complex consists of a ten-subunit catalytic core composed of POLR3A/RPC1, POLR3B/RPC2, POLR1C/RPAC1, POLR1D/RPAC2, POLR3K/RPC10, POLR2E/RPABC1, POLR2F/RPABC2, POLR2H/RPABC3, POLR2K/RPABC4 and POLR2L/RPABC5; a mobile stalk composed of two subunits POLR3H/RPC8 and CRCP/RPC9, protruding from the core and functioning primarily in transcription initiation; and additional subunits homologous to general transcription factors of the RNA polymerase II machinery, POLR3C/RPC3-POLR3F/RPC6-POLR3G/RPC7 heterotrimer required for transcription initiation and POLR3D/RPC4-POLR3E/RPC5 heterodimer involved in both transcription initiation and termination. Component of the PAQosome complex which is responsible for the biogenesis of several protein complexes and which consists of R2TP complex members RUVBL1, RUVBL2, RPAP3 and PIH1D1, URI complex members PFDN2, PFDN6, PDRG1, UXT and URI1 as well as ASDURF, POLR2E and DNAAF10/WDR92. Interacts with URI1. In terms of assembly, (Microbial infection) Interacts with HBV protein X.

It is found in the nucleus. It localises to the nucleolus. DNA-dependent RNA polymerase catalyzes the transcription of DNA into RNA using the four ribonucleoside triphosphates as substrates. Common component of RNA polymerases I, II and III which synthesize ribosomal RNA precursors, mRNA precursors and many functional non-coding RNAs, and small RNAs, such as 5S rRNA and tRNAs, respectively. Pol II is the central component of the basal RNA polymerase II transcription machinery. Pols are composed of mobile elements that move relative to each other. In Pol II, POLR2E/RPABC1 is part of the lower jaw surrounding the central large cleft and thought to grab the incoming DNA template. This is DNA-directed RNA polymerases I, II, and III subunit RPABC1 from Homo sapiens (Human).